Consider the following 117-residue polypeptide: MALETVPKDLRHLRACLLCSLVKTIDQFEYDGCDNCDAYLQMKGNREMVYDCTSSSFDGIVAMMSPDDSWVSKWQRITNFKPGVYAVSVTGRLPQGIVRELKSRGVVYKSRDTAIKT.

The tract at residues 1–40 (MALETVPKDLRHLRACLLCSLVKTIDQFEYDGCDNCDAYL) is interaction with SUPT5H. The C4-type zinc-finger motif lies at 16–36 (CLLCSLVKTIDQFEYDGCDNC).

The protein belongs to the SPT4 family. In terms of assembly, interacts with SUPT5H to form the DSIF complex. DSIF interacts with RNA polymerase II and with the positive transcription elongation factor b complex (P-TEFb complex), which is composed of CDK9 and cyclin-T.

The protein localises to the nucleus. Its function is as follows. May function as a component of the DRB sensitivity-inducing factor complex (DSIF complex), which regulates transcription elongation by RNA polymerase II. Probably enhances transcriptional pausing at sites proximal to the promoter, which may in turn facilitate the assembly of an elongation competent RNA polymerase II complex. In Xenopus laevis (African clawed frog), this protein is Transcription elongation factor SPT4 (supt4h1).